We begin with the raw amino-acid sequence, 952 residues long: Eukaryotic translation initiation factor 3 subunit A (952 aa).

The PCI domain maps to 315–491 (HAERAGIVND…QTITFVSTPP (177 aa)). A coiled-coil region spans residues 522 to 849 (DAFAAAIAQA…RRQAEKAAAT (328 aa)). The segment covering 757–797 (EKVIKRKREEKERKLKEAREAEERKRKEEEEAAQKAEEEAR) has biased composition (basic and acidic residues). The segment at 757 to 952 (EKVIKRKREE…RGMPSTRGGA (196 aa)) is disordered. The span at 798–809 (AAAALEAEAAAA) shows a compositional bias: low complexity. Residues 810–844 (EQRRAEREAQRQSDLERIRAQQEREEEALRRRQAE) are compositionally biased toward basic and acidic residues. Low complexity-rich tracts occupy residues 856–878 (RPPA…GGPS) and 893–918 (GAPV…SNGP).

Belongs to the eIF-3 subunit A family. Component of the eukaryotic translation initiation factor 3 (eIF-3) complex.

The protein resides in the cytoplasm. In terms of biological role, RNA-binding component of the eukaryotic translation initiation factor 3 (eIF-3) complex, which is involved in protein synthesis of a specialized repertoire of mRNAs and, together with other initiation factors, stimulates binding of mRNA and methionyl-tRNAi to the 40S ribosome. The eIF-3 complex specifically targets and initiates translation of a subset of mRNAs involved in cell proliferation. This is Eukaryotic translation initiation factor 3 subunit A from Cryptococcus neoformans var. neoformans serotype D (strain B-3501A) (Filobasidiella neoformans).